The sequence spans 122 residues: Large ribosomal subunit protein uL14 (122 aa).

The protein belongs to the universal ribosomal protein uL14 family. As to quaternary structure, part of the 50S ribosomal subunit. Forms a cluster with proteins L3 and L19. In the 70S ribosome, L14 and L19 interact and together make contacts with the 16S rRNA in bridges B5 and B8.

Functionally, binds to 23S rRNA. Forms part of two intersubunit bridges in the 70S ribosome. This chain is Large ribosomal subunit protein uL14, found in Rickettsia felis (strain ATCC VR-1525 / URRWXCal2) (Rickettsia azadi).